The chain runs to 357 residues: Dihydroorotate dehydrogenase (quinone) (357 aa).

Residues 65–69 (AGLDK) and T89 contribute to the FMN site. K69 is a substrate binding site. Residue 114–118 (NRFGF) coordinates substrate. 2 residues coordinate FMN: N156 and N189. N189 provides a ligand contact to substrate. S192 serves as the catalytic Nucleophile. N194 provides a ligand contact to substrate. K234 and T262 together coordinate FMN. Residue 263–264 (NT) participates in substrate binding. Residues G285, G314, and 335 to 336 (YT) contribute to the FMN site.

The protein belongs to the dihydroorotate dehydrogenase family. Type 2 subfamily. Monomer. FMN serves as cofactor.

It is found in the cell membrane. It carries out the reaction (S)-dihydroorotate + a quinone = orotate + a quinol. Its pathway is pyrimidine metabolism; UMP biosynthesis via de novo pathway; orotate from (S)-dihydroorotate (quinone route): step 1/1. Catalyzes the conversion of dihydroorotate to orotate with quinone as electron acceptor. The chain is Dihydroorotate dehydrogenase (quinone) from Albidiferax ferrireducens (strain ATCC BAA-621 / DSM 15236 / T118) (Rhodoferax ferrireducens).